The following is a 158-amino-acid chain: Ribosome maturation factor RimP (158 aa).

Belongs to the RimP family.

The protein localises to the cytoplasm. Required for maturation of 30S ribosomal subunits. The polypeptide is Ribosome maturation factor RimP (Streptococcus suis (strain 98HAH33)).